The chain runs to 207 residues: uncharacterized protein (207 aa).

Belongs to the flavoredoxin family. FMN serves as cofactor.

This is an uncharacterized protein from Bacillus subtilis (strain 168).